The chain runs to 552 residues: Phosphoglucomutase (552 aa).

Ser-143 (phosphoserine intermediate) is an active-site residue. Mg(2+)-binding residues include Ser-143, Asp-295, Asp-297, and Asp-299.

The protein belongs to the phosphohexose mutase family. Requires Mg(2+) as cofactor.

It catalyses the reaction alpha-D-glucose 1-phosphate = alpha-D-glucose 6-phosphate. It participates in glycolipid metabolism; diglucosyl-diacylglycerol biosynthesis. Catalyzes the interconversion between glucose-6-phosphate and alpha-glucose-1-phosphate. This is the first step in the biosynthesis of diglucosyl-diacylglycerol (Glc2-DAG), i.e. the predominant glycolipid found in the S.aureus membrane, which is also used as a membrane anchor for lipoteichoic acid (LTA). This Staphylococcus aureus (strain Mu50 / ATCC 700699) protein is Phosphoglucomutase (pgcA).